The chain runs to 132 residues: Antileukoproteinase (132 aa).

Residues Met-1–Gly-24 form the signal peptide. The WAP 1 domain maps to Glu-28–Val-76. Disulfide bonds link Cys-35-Cys-64, Cys-43-Cys-68, Cys-51-Cys-63, and Cys-57-Cys-72. The N-linked (GlcNAc...) asparagine glycan is linked to Asn-77. The 49-residue stretch at Val-82–Val-130 folds into the WAP 2 domain. Cystine bridges form between Cys-89-Cys-118, Cys-96-Cys-122, Cys-105-Cys-117, and Cys-111-Cys-126.

As to quaternary structure, interacts with GRN; interaction protects progranulin from proteolysis. Detected in bronchoalveolar fluid (at protein level). Detected in large and small intestine, trachea, skin, lung and tongue.

It is found in the secreted. Acid-stable proteinase inhibitor with strong affinities for trypsin, chymotrypsin, elastase, and cathepsin G. Modulates the inflammatory and immune responses after bacterial infection, and after infection by the intracellular parasite L.major. Down-regulates responses to bacterial lipopolysaccharide (LPS). Plays a role in regulating the activation of NF-kappa-B and inflammatory responses. Has antimicrobial activity against mycobacteria, but not against salmonella. Contributes to normal resistance against infection by M.tuberculosis. Required for normal resistance to infection by L.major. Required for normal wound healing, probably by preventing tissue damage by limiting protease activity. Together with ELANE, required for normal differentiation and proliferation of bone marrow myeloid cells. This Ovis aries (Sheep) protein is Antileukoproteinase (SLPI).